A 281-amino-acid chain; its full sequence is Very long chain fatty acid elongase 7 (281 aa).

Ala2 bears the N-acetylalanine mark. The Lumenal portion of the chain corresponds to Ala2 to Asp27. Residues Trp28–Val48 traverse the membrane as a helical segment. Residues Thr49 to Asn72 lie on the Cytoplasmic side of the membrane. A helical membrane pass occupies residues Phe73 to Ile93. Residues Gly94–Arg115 lie on the Lumenal side of the membrane. A disulfide bridge connects residues Cys99 and Cys231. Residues Thr116 to Leu136 traverse the membrane as a helical segment. The 3-oxoeicosanoyl-CoA site is built by Lys124, Arg137, Lys139, Gln142, and His147. At Arg137–Gln142 the chain is on the cytoplasmic side. A helical membrane pass occupies residues Val143–Val162. The HxxHH motif signature appears at His147 to His151. The Nucleophile role is filled by His150. Over Lys163–Thr171 the chain is Lumenal. The chain crosses the membrane as a helical span at residues Phe172 to Gly194. 3-oxoeicosanoyl-CoA is bound by residues Tyr187, Lys204, Thr208, and Gln211. Over Pro195–Tyr206 the chain is Cytoplasmic. A helical membrane pass occupies residues Leu207–Phe227. The Lumenal segment spans residues Met228–Pro236. The helical transmembrane segment at Val237–Trp257 threads the bilayer. Over Tyr258–Asn281 the chain is Cytoplasmic. Arg266 is a 3-oxoeicosanoyl-CoA binding site. The Di-lysine motif motif lies at Lys277–Asn281.

This sequence belongs to the ELO family. ELOVL7 subfamily. As to quaternary structure, homodimer. Interacts with TECR. As to expression, expressed in most tissues except heart and skeletal muscle.

The protein resides in the endoplasmic reticulum membrane. It carries out the reaction a very-long-chain acyl-CoA + malonyl-CoA + H(+) = a very-long-chain 3-oxoacyl-CoA + CO2 + CoA. The catalysed reaction is eicosanoyl-CoA + malonyl-CoA + H(+) = 3-oxodocosanoyl-CoA + CO2 + CoA. It catalyses the reaction (5Z,8Z,11Z,14Z)-eicosatetraenoyl-CoA + malonyl-CoA + H(+) = (7Z,10Z,13Z,16Z)-3-oxodocosatetraenoyl-CoA + CO2 + CoA. The enzyme catalyses (6Z,9Z,12Z)-octadecatrienoyl-CoA + malonyl-CoA + H(+) = (8Z,11Z,14Z)-3-oxoeicosatrienoyl-CoA + CO2 + CoA. It carries out the reaction (9Z,12Z)-octadecadienoyl-CoA + malonyl-CoA + H(+) = (11Z,14Z)-3-oxoicosa-11,14-dienoyl-CoA + CO2 + CoA. The catalysed reaction is (9Z)-octadecenoyl-CoA + malonyl-CoA + H(+) = 3-oxo-(11Z)-eicosenoyl-CoA + CO2 + CoA. It catalyses the reaction octadecanoyl-CoA + malonyl-CoA + H(+) = 3-oxoeicosanoyl-CoA + CO2 + CoA. The enzyme catalyses hexadecanoyl-CoA + malonyl-CoA + H(+) = 3-oxooctadecanoyl-CoA + CO2 + CoA. It carries out the reaction (9Z,12Z,15Z)-octadecatrienoyl-CoA + malonyl-CoA + H(+) = (11Z,14Z,17Z)-3-oxoeicosatrienoyl-CoA + CO2 + CoA. It participates in lipid metabolism; fatty acid biosynthesis. Catalyzes the first and rate-limiting reaction of the four reactions that constitute the long-chain fatty acids elongation cycle. This endoplasmic reticulum-bound enzymatic process allows the addition of 2 carbons to the chain of long- and very long-chain fatty acids (VLCFAs) per cycle. Condensing enzyme with higher activity toward C18 acyl-CoAs, especially C18:3(n-3) acyl-CoAs and C18:3(n-6)-CoAs. Also active toward C20:4-, C18:0-, C18:1-, C18:2- and C16:0-CoAs, and weakly toward C20:0-CoA. Little or no activity toward C22:0-, C24:0-, or C26:0-CoAs. May participate in the production of saturated and polyunsaturated VLCFAs of different chain lengths that are involved in multiple biological processes as precursors of membrane lipids and lipid mediators. The polypeptide is Very long chain fatty acid elongase 7 (Homo sapiens (Human)).